Consider the following 363-residue polypeptide: NAD(P)H-quinone oxidoreductase subunit 1, chloroplastic (363 aa).

8 consecutive transmembrane segments (helical) span residues 30–50 (LVPI…IVWL), 98–118 (FSIG…VIPF), 127–147 (LSIG…GLLM), 165–185 (AAQS…ISLL), 203–223 (FWGW…ISSL), 248–268 (YSGI…LVSS), 300–320 (VFGT…FLFI), and 336–356 (LLNL…LLTT).

The protein belongs to the complex I subunit 1 family. As to quaternary structure, NDH is composed of at least 16 different subunits, 5 of which are encoded in the nucleus.

It localises to the plastid. It is found in the chloroplast thylakoid membrane. The enzyme catalyses a plastoquinone + NADH + (n+1) H(+)(in) = a plastoquinol + NAD(+) + n H(+)(out). It catalyses the reaction a plastoquinone + NADPH + (n+1) H(+)(in) = a plastoquinol + NADP(+) + n H(+)(out). NDH shuttles electrons from NAD(P)H:plastoquinone, via FMN and iron-sulfur (Fe-S) centers, to quinones in the photosynthetic chain and possibly in a chloroplast respiratory chain. The immediate electron acceptor for the enzyme in this species is believed to be plastoquinone. Couples the redox reaction to proton translocation, and thus conserves the redox energy in a proton gradient. The chain is NAD(P)H-quinone oxidoreductase subunit 1, chloroplastic from Solanum bulbocastanum (Wild potato).